A 296-amino-acid chain; its full sequence is Bifunctional protein FolD (296 aa).

NADP(+)-binding positions include 168–170, Ser197, and Thr238; that span reads GRS.

The protein belongs to the tetrahydrofolate dehydrogenase/cyclohydrolase family. As to quaternary structure, homodimer.

The enzyme catalyses (6R)-5,10-methylene-5,6,7,8-tetrahydrofolate + NADP(+) = (6R)-5,10-methenyltetrahydrofolate + NADPH. It carries out the reaction (6R)-5,10-methenyltetrahydrofolate + H2O = (6R)-10-formyltetrahydrofolate + H(+). Its pathway is one-carbon metabolism; tetrahydrofolate interconversion. In terms of biological role, catalyzes the oxidation of 5,10-methylenetetrahydrofolate to 5,10-methenyltetrahydrofolate and then the hydrolysis of 5,10-methenyltetrahydrofolate to 10-formyltetrahydrofolate. The protein is Bifunctional protein FolD of Porphyromonas gingivalis (strain ATCC BAA-308 / W83).